The chain runs to 506 residues: Aerotaxis receptor (506 aa).

At Met-1 to Arg-166 the chain is on the cytoplasmic side. A helical membrane pass occupies residues Gly-167–Pro-186. Over Val-187 to Tyr-190 the chain is Periplasmic. The helical transmembrane segment at Ile-191–Val-209 threads the bilayer. At Arg-210 to His-506 the chain is on the cytoplasmic side. In terms of domain architecture, Methyl-accepting transducer spans Gln-263 to Lys-492.

The protein belongs to the methyl-accepting chemotaxis (MCP) protein family.

The protein resides in the cell inner membrane. Signal transducer for aerotaxis. The aerotactic response is the accumulation of cells around air bubbles. The nature of the sensory stimulus detected by this protein is the proton motive force or cellular redox state. It uses a FAD prosthetic group as a redox sensor to monitor oxygen levels. The sequence is that of Aerotaxis receptor (aer) from Escherichia coli (strain K12).